Here is a 637-residue protein sequence, read N- to C-terminus: Serine protease Hayan (637 aa).

An N-terminal signal peptide occupies residues 1–26; sequence MAMISARRYFLLGLLVLTTSAYVTVG. One can recognise a Clip domain in the interval 31–79; that stretch reads PCQVRSDIPGICLSSSACENIRGYLKSGTLSTSQVPSCGFGAREEIICC. 3 cysteine pairs are disulfide-bonded: Cys-32–Cys-78, Cys-42–Cys-68, and Cys-48–Cys-79. 4 disordered regions span residues 95–137, 152–178, 216–260, and 286–365; these read FHAT…LDEN, KPQK…SMKM, QRSF…NNNN, and LQTT…EKER. The segment covering 125-136 has biased composition (basic and acidic residues); that stretch reads EGKRERESRLDE. The span at 234 to 244 shows a compositional bias: polar residues; it reads PLTTPRSRPQR. A compositionally biased stretch (low complexity) spans 245–260; sequence PNNSNFNTNPSPNNNN. Residues 306 to 320 are compositionally biased toward basic and acidic residues; that stretch reads EPYRFRGQDRDKDTQ. The span at 321–332 shows a compositional bias: polar residues; that stretch reads PQEPWNDVSNNL. 4 disulfides stabilise this stretch: Cys-371–Cys-497, Cys-414–Cys-430, Cys-543–Cys-567, and Cys-578–Cys-609. The region spanning 385–632 is the Peptidase S1 domain; sequence ILDGERVDRG…FLDYIEGIVW (248 aa). Catalysis depends on charge relay system residues His-429 and Asp-477. The active-site Charge relay system is Ser-582.

This sequence belongs to the peptidase S1 family. CLIP subfamily.

The protein localises to the secreted. Serine protease which, by converting prophenoloxidase 1 (PPO1) into its active form, plays an essential role in the melanization immune response to physical or septic wounding. May function in diverse PPO1-activating cascades that are negatively controlled by different serpin proteins; Spn27A and Spn28D in the hemolymph, and Spn28D and Spn77BA in the trachea. Also required in the systematic wound response by mediating the redox-dependent activation of the JNK cytoprotective cascade in neuronal tissues after integument wounding. This is Serine protease Hayan from Drosophila melanogaster (Fruit fly).